Reading from the N-terminus, the 309-residue chain is Homoserine kinase (309 aa).

91 to 101 (PIGSGLGSSAC) is a binding site for ATP.

Belongs to the GHMP kinase family. Homoserine kinase subfamily.

The protein resides in the cytoplasm. It catalyses the reaction L-homoserine + ATP = O-phospho-L-homoserine + ADP + H(+). The protein operates within amino-acid biosynthesis; L-threonine biosynthesis; L-threonine from L-aspartate: step 4/5. Functionally, catalyzes the ATP-dependent phosphorylation of L-homoserine to L-homoserine phosphate. This Edwardsiella ictaluri (strain 93-146) protein is Homoserine kinase.